Here is a 171-residue protein sequence, read N- to C-terminus: MNSNGDKLSLSVQNLANTNEITIVQAIGELKKSGKDAIPVLVEALKEEGSLCNIAAAVLGEFGEDASEAAEELSCLLKSHAEDTRMAAAISLMRIGKPSLPFVIKIAQESEGQSCFWASWCIAWIDPSCIEPKMYKCLKYEHEHPSGIVAPFAAEEALGKLIAFQLKDKED.

Required for production of the bacteriocin SkfA. This is an uncharacterized protein from Bacillus subtilis (strain 168).